We begin with the raw amino-acid sequence, 527 residues long: Type II methyltransferase M.XamI (527 aa).

The protein belongs to the N(4)/N(6)-methyltransferase family.

The catalysed reaction is a 2'-deoxyadenosine in DNA + S-adenosyl-L-methionine = an N(6)-methyl-2'-deoxyadenosine in DNA + S-adenosyl-L-homocysteine + H(+). A gamma subtype methylase that recognizes the double-stranded sequence 5'-GTCGAC-3', possibly methylates A-5 on both strands, and protects the DNA from cleavage by the XamI endonuclease. In Xanthomonas campestris pv. amaranthicola, this protein is Type II methyltransferase M.XamI.